Reading from the N-terminus, the 117-residue chain is Huntingtin-interacting protein M (117 aa).

Composition is skewed to basic and acidic residues over residues 1–11 (MSEKKSQEKPC) and 83–97 (QDRE…EPSR). Disordered regions lie at residues 1 to 25 (MSEK…SRPE) and 74 to 117 (NINN…RRNG).

In terms of assembly, may interact with the N-terminus of HD.

The polypeptide is Huntingtin-interacting protein M (Mus musculus (Mouse)).